Reading from the N-terminus, the 364-residue chain is tRNA-specific 2-thiouridylase MnmA (364 aa).

Residues 12–19 (GISGGVDS) and M38 each bind ATP. Positions 98-100 (NPD) are interaction with target base in tRNA. The active-site Nucleophile is the C103. The cysteines at positions 103 and 199 are disulfide-linked. Position 127 (G127) interacts with ATP. The interval 149–151 (KEQ) is interaction with tRNA. Catalysis depends on C199, which acts as the Cysteine persulfide intermediate. Residues 311-312 (RY) are interaction with tRNA.

Belongs to the MnmA/TRMU family.

The protein localises to the cytoplasm. The enzyme catalyses S-sulfanyl-L-cysteinyl-[protein] + uridine(34) in tRNA + AH2 + ATP = 2-thiouridine(34) in tRNA + L-cysteinyl-[protein] + A + AMP + diphosphate + H(+). Catalyzes the 2-thiolation of uridine at the wobble position (U34) of tRNA, leading to the formation of s(2)U34. The polypeptide is tRNA-specific 2-thiouridylase MnmA (Hahella chejuensis (strain KCTC 2396)).